The sequence spans 381 residues: Cytochrome b (381 aa).

Transmembrane regions (helical) follow at residues 34–54 (FGSL…FLAM), 78–99 (WLIR…YIHI), 114–134 (WNIG…GYVL), and 179–199 (FFAF…IHVL). Heme b contacts are provided by His84 and His98. Residues His183 and His197 each coordinate heme b. Residue His202 coordinates a ubiquinone. Helical transmembrane passes span 227-247 (YKDA…ALFL), 289-309 (LGGV…PLLH), 321-341 (LTQV…WIGG), and 348-368 (FILI…IAMP).

It belongs to the cytochrome b family. In terms of assembly, the cytochrome bc1 complex contains 3 respiratory subunits (MT-CYB, CYC1 and UQCRFS1), 2 core proteins (UQCRC1 and UQCRC2) and probably 6 low-molecular weight proteins. It depends on heme b as a cofactor.

The protein resides in the mitochondrion inner membrane. Component of the ubiquinol-cytochrome c reductase complex (complex III or cytochrome b-c1 complex) that is part of the mitochondrial respiratory chain. The b-c1 complex mediates electron transfer from ubiquinol to cytochrome c. Contributes to the generation of a proton gradient across the mitochondrial membrane that is then used for ATP synthesis. The sequence is that of Cytochrome b (mt-cyb) from Isurus paucus (Longfin mako shark).